The following is a 130-amino-acid chain: Small ribosomal subunit protein uS9 (130 aa).

This sequence belongs to the universal ribosomal protein uS9 family.

This is Small ribosomal subunit protein uS9 from Colwellia psychrerythraea (strain 34H / ATCC BAA-681) (Vibrio psychroerythus).